The chain runs to 379 residues: RIB43A-like with coiled-coils protein 1 (379 aa).

The segment at 1–21 (MYNINQSTDTKEAAAIEARRN) is disordered. Residues 9–21 (DTKEAAAIEARRN) are compositionally biased toward basic and acidic residues. Coiled-coil stretches lie at residues 85–111 (ADRT…GREF), 161–241 (RYNL…KANL), and 280–304 (EQRA…QAEK).

This sequence belongs to the RIB43A family. In terms of assembly, microtubule inner protein component of sperm flagellar doublet microtubules.

The protein localises to the cytoplasm. It is found in the cytoskeleton. The protein resides in the flagellum axoneme. The polypeptide is RIB43A-like with coiled-coils protein 1 (RIBC1) (Macaca fascicularis (Crab-eating macaque)).